Consider the following 399-residue polypeptide: Ectoine hydrolase (399 aa).

This sequence belongs to the peptidase M24 family.

It localises to the cytoplasm. It carries out the reaction L-ectoine + H2O = (2S)-2-acetamido-4-aminobutanoate. In terms of biological role, involved in the degradation of ectoine, which allows H.elongata to utilize ectoine as both a carbon and a nitrogen source for growth. Catalyzes the hydrolysis of ectoine to N-acetyl-L-2,4-diaminobutyric acid (N-Ac-DABA). It can produce both isoforms N-gamma-acetyl-L-2,4-diaminobutyric acid (N-gamma-Ac-DABA) and N-alpha-acetyl-L-2,4-diaminobutyric acid (-Nalpha-Ac-DABA), however N-alpha-Ac-DABA is the essential substrate for the subsequent catabolic enzyme DoeB. The polypeptide is Ectoine hydrolase (Halomonas elongata (strain ATCC 33173 / DSM 2581 / NBRC 15536 / NCIMB 2198 / 1H9)).